The sequence spans 263 residues: Alpha-tubulin N-acetyltransferase 2 (263 aa).

Residues 1–181 enclose the N-acetyltransferase domain; that stretch reads MEIAFDLSTI…NKYALCSNFF (181 aa). 115–128 is a binding site for acetyl-CoA; sequence FFVVPTEQRSGNGF. Disordered stretches follow at residues 191–223 and 242–263; these read TPRQTKRASRASSAVSSHASSRNTSPIGRNRPR and EVDPNSPTGLKNARDFGHRRIW. A compositionally biased stretch (low complexity) spans 200–212; it reads RASSAVSSHASSR. Positions 253–263 are enriched in basic and acidic residues; that stretch reads NARDFGHRRIW.

This sequence belongs to the acetyltransferase ATAT1 family. In terms of tissue distribution, expressed in touch receptor neurons and in a subset of ciliated neurons, including PDE, ADE, CEP, and OLQ neurons.

The enzyme catalyses L-lysyl-[alpha-tubulin] + acetyl-CoA = N(6)-acetyl-L-lysyl-[alpha-tubulin] + CoA + H(+). In terms of biological role, specifically acetylates 'Lys-40' in alpha-tubulin/mec-12 on the lumenal side of microtubules. Promotes microtubule destabilization and accelerates microtubule dynamics; this activity may be independent of acetylation activity. Acetylates alpha-tubulin with a slow enzymatic rate, due to a catalytic site that is not optimized for acetyl transfer. Enters the microtubule through each end and diffuses quickly throughout the lumen of microtubules. Acetylates only long/old microtubules because of its slow acetylation rate since it does not have time to act on dynamically unstable microtubules before the enzyme is released. Required for the maintenance of touch receptor neurons and possibly other type of neurons involved in locomotion. In Caenorhabditis elegans, this protein is Alpha-tubulin N-acetyltransferase 2 (atat-2).